Consider the following 356-residue polypeptide: Tyrosine recombinase XerS (356 aa).

The region spanning 16 to 121 is the Core-binding (CB) domain; the sequence is LMPWYVLEYY…ALSSLYKYLT (106 aa). One can recognise a Tyr recombinase domain in the interval 169-354; it reads GFLTYIDQEH…VNDEQKNALD (186 aa). Residues Arg210, Lys234, His306, Arg309, and His332 contribute to the active site. The active-site O-(3'-phospho-DNA)-tyrosine intermediate is the Tyr341.

The protein belongs to the 'phage' integrase family. XerS subfamily.

The protein localises to the cytoplasm. Its activity is regulated as follows. FtsK is required for recombination. Site-specific tyrosine recombinase, which acts by catalyzing the cutting and rejoining of the recombining DNA molecules. Essential to convert dimers of the bacterial chromosome into monomers to permit their segregation at cell division. The protein is Tyrosine recombinase XerS of Streptococcus pneumoniae serotype 2 (strain D39 / NCTC 7466).